The primary structure comprises 211 residues: MIPAQDITGLILAGGRGSRMGGVDKGLQTFNGMPLALHTLTRLQMGGGVGQIMINANRNLAAYESFGASVWPDGLADYAGPLAGFLTGLEHCETPFLVTVPCDTPRLPLDLVPRLAAALEAENADIAMVAAPEIGKDGQVRLRPQPVFCLLRVELLESLVRFTQEGGRKIDAWTALHKTAVAPFDLPHDDPLAFFNANTLAELHQLENNPA.

Residues 12 to 14 (LAG), Lys-25, Asn-55, Asp-73, and Asp-103 each bind GTP. Mg(2+) is bound at residue Asp-103.

It belongs to the MobA family. As to quaternary structure, monomer. Mg(2+) serves as cofactor.

The protein localises to the cytoplasm. The catalysed reaction is Mo-molybdopterin + GTP + H(+) = Mo-molybdopterin guanine dinucleotide + diphosphate. Functionally, transfers a GMP moiety from GTP to Mo-molybdopterin (Mo-MPT) cofactor (Moco or molybdenum cofactor) to form Mo-molybdopterin guanine dinucleotide (Mo-MGD) cofactor. This chain is Molybdenum cofactor guanylyltransferase, found in Albidiferax ferrireducens (strain ATCC BAA-621 / DSM 15236 / T118) (Rhodoferax ferrireducens).